Here is a 307-residue protein sequence, read N- to C-terminus: Ribonuclease Z (307 aa).

Zn(2+) contacts are provided by His61, His63, Asp65, His66, His138, Asp208, and His264. Asp65 (proton acceptor) is an active-site residue.

The protein belongs to the RNase Z family. As to quaternary structure, homodimer. The cofactor is Zn(2+).

The catalysed reaction is Endonucleolytic cleavage of RNA, removing extra 3' nucleotides from tRNA precursor, generating 3' termini of tRNAs. A 3'-hydroxy group is left at the tRNA terminus and a 5'-phosphoryl group is left at the trailer molecule.. Its function is as follows. Zinc phosphodiesterase, which displays some tRNA 3'-processing endonuclease activity. Probably involved in tRNA maturation, by removing a 3'-trailer from precursor tRNA. The protein is Ribonuclease Z of Pyrococcus horikoshii (strain ATCC 700860 / DSM 12428 / JCM 9974 / NBRC 100139 / OT-3).